The primary structure comprises 462 residues: 2-(3-amino-3-carboxypropyl)histidine synthase subunit 1 (462 aa).

Residues 1–87 (MEEDRRQTDL…AVATAKPRRA (87 aa)) form a disordered region. Residues 35–44 (ESAAQTQNGA) are compositionally biased toward polar residues. Residues Cys173, Cys276, and Cys406 each contribute to the [4Fe-4S] cluster site.

Belongs to the DPH1/DPH2 family. DPH1 subfamily. As to quaternary structure, component of the 2-(3-amino-3-carboxypropyl)histidine synthase complex composed of DPH1, DPH2, DPH3 and a NADH-dependent reductase, predominantly CBR1. It depends on [4Fe-4S] cluster as a cofactor.

It localises to the cytoplasm. The catalysed reaction is L-histidyl-[translation elongation factor 2] + S-adenosyl-L-methionine = 2-[(3S)-amino-3-carboxypropyl]-L-histidyl-[translation elongation factor 2] + S-methyl-5'-thioadenosine + H(+). Its pathway is protein modification; peptidyl-diphthamide biosynthesis. In terms of biological role, catalyzes the first step of diphthamide biosynthesis, a post-translational modification of histidine which occurs in elongation factor 2. DPH1 and DPH2 transfer a 3-amino-3-carboxypropyl (ACP) group from S-adenosyl-L-methionine (SAM) to a histidine residue, the reaction is assisted by a reduction system comprising DPH3 and a NADH-dependent reductase, predominantly CBR1. The polypeptide is 2-(3-amino-3-carboxypropyl)histidine synthase subunit 1 (DPH1) (Gibberella zeae (strain ATCC MYA-4620 / CBS 123657 / FGSC 9075 / NRRL 31084 / PH-1) (Wheat head blight fungus)).